A 1098-amino-acid chain; its full sequence is Beta-alanine-activating enzyme (1098 aa).

ATP-binding positions include 198-206, D428, R442, and K527; that span reads TSGTTGIPK. Positions 553–630 constitute a Carrier domain; the sequence is EDLWEKLQYL…EIYNHILQTV (78 aa). At S589 the chain carries O-(pantetheine 4'-phosphoryl)serine. Residues S649 and S724 each carry the phosphoserine modification.

This sequence belongs to the ATP-dependent AMP-binding enzyme family. In terms of tissue distribution, ubiquitously expressed in adult tissues.

Functionally, covalently binds beta-alanine in an ATP-dependent manner to form a thioester bond with its phosphopantetheine group and transfers it to an, as yet, unknown acceptor. May be required for a post-translational protein modification or for post-transcriptional modification of an RNA. The chain is Beta-alanine-activating enzyme (AASDH) from Homo sapiens (Human).